The chain runs to 320 residues: Fructose-1,6-bisphosphatase class 1 (320 aa).

Mg(2+) is bound by residues E93, D114, L116, and D117. Residues 117–120 (DGSS), Y225, and K256 each bind substrate. E262 is a Mg(2+) binding site.

This sequence belongs to the FBPase class 1 family. Homotetramer. Mg(2+) serves as cofactor.

The protein localises to the cytoplasm. It carries out the reaction beta-D-fructose 1,6-bisphosphate + H2O = beta-D-fructose 6-phosphate + phosphate. It functions in the pathway carbohydrate biosynthesis; gluconeogenesis. This chain is Fructose-1,6-bisphosphatase class 1, found in Syntrophotalea carbinolica (strain DSM 2380 / NBRC 103641 / GraBd1) (Pelobacter carbinolicus).